The primary structure comprises 381 residues: MELQPQFNEFLANIRPTDTQKEDWKSGARTLRERLKNFEPLKEIVVSTFLQGSIRRSTAIRPLGDKRPDVDIVVVTNLDHTRMSPTDAMDLFIPFLEKYYPGKWETQGRSFGITLSYVELDLVITAIPESGAEKSHLEQLYKSESVLTVNSLEEQTDWRLNKSWTPNTGWLSESNSAQVEDAPASEWKAHPLVLPDREKNEWGRTHPLAQIRWTAEKNRLCNGHYINLVRAVKWWRQQNSEDLPKYPKGYPLEHLIGNALDNGTTSMAQGLVQLMDTFLSRWAAIYNQKSKPWLSDHGVAEHDVMARLTAEDFCSFYEGIASAAEIARNALASEEPQESAQLWRQLFGSKFPLPGPQGGDRNGGFTTPSKPAEPQKTGRFA.

Positions 51, 53, 56, 69, 71, and 109 each coordinate ATP. Catalysis depends on residues aspartate 69 and aspartate 71. Residues aspartate 69 and aspartate 71 each coordinate Mg(2+). The active site involves aspartate 121. Mg(2+) contacts are provided by aspartate 121 and aspartate 196. The ATP site is built by aspartate 196, arginine 197, arginine 204, threonine 205, glutamine 210, lysine 233, and tyrosine 250. Mg(2+)-binding residues include asparagine 258 and leucine 260. Positions 304 and 307 each coordinate ATP. The tract at residues 348–381 (GSKFPLPGPQGGDRNGGFTTPSKPAEPQKTGRFA) is disordered.

This sequence belongs to the CD-NTase family. D02 subfamily. In terms of assembly, monomer. Crystallizes as a Cap2 homodimer bound on each side by a CdnD monomer. The cofactor is Mg(2+). In terms of processing, in bacteria expressing cap4-dncV-cap2-cap3, this protein is conjugated to a number of other proteins by Cap2, probably via this protein's C-terminal Ala residue. More conjugated DncV is found in the absence of Cap3.

It carries out the reaction GTP + 2 ATP = 3',3',3'-cAAG + 3 diphosphate. Its activity is regulated as follows. Primed for activation by Cap2 which conjugates it to cellular proteins; activation is target protein-specific (green fluorescent protein does not activate the enzyme), but which protein(s) activate it is unclear. Its function is as follows. Cyclic nucleotide synthase (second messenger synthase) of a CBASS antivirus system. CBASS (cyclic oligonucleotide-based antiphage signaling system) provides immunity against bacteriophages. The CD-NTase protein (CdnD, this protein) synthesizes cyclic nucleotides in response to infection; these serve as specific second messenger signals. The signals activate a diverse range of effectors, leading to bacterial cell death and thus abortive phage infection. A type II-C(AAG) CBASS system. In terms of biological role, cyclic trinucleotide synthase that catalyzes the synthesis of 3',3',3'-cyclic AMP-AMP-GMP (cAAG) as the major product, a second messenger for cell signal transduction. Uses ATP as the first donor nucleotide, followed by GTP. Functionally, protects E.coli against phage T2 infection. When the cdnD-cap2-cap3-cap4 operon is introduced in E.coli there is a more than 10(3) decrease in the efficiency of T2 plaque formation. The operon does not protect against phage T5 and only about 10-fold against T7. Expression of cdnD-cap4 alone protects E.coli against phage T2 infection. The polypeptide is Cyclic AMP-AMP-GMP synthase (Enterobacter hormaechei subsp. hoffmannii (strain UCI 50)).